We begin with the raw amino-acid sequence, 570 residues long: Putative periplasmic trehalase (570 aa).

The first 34 residues, 1–34 (MIPPEIRRSVLLQKAIKLALAGTLLTFASFSATA), serve as a signal peptide directing secretion. Substrate contacts are provided by residues Arg159, 166–167 (WD), Asn203, 212–214 (RSQ), 284–286 (RPE), and Gly317. Residues Asp319 and Glu503 each act as proton donor/acceptor in the active site. Glu518 is a binding site for substrate. A disordered region spans residues 544-570 (KPCDSVPSTRPASLSATPTKTPSAATQ). The span at 554-570 (PASLSATPTKTPSAATQ) shows a compositional bias: low complexity.

This sequence belongs to the glycosyl hydrolase 37 family. As to quaternary structure, monomer.

The protein resides in the periplasm. The enzyme catalyses alpha,alpha-trehalose + H2O = alpha-D-glucose + beta-D-glucose. Its function is as follows. Provides the cells with the ability to utilize trehalose at high osmolarity by splitting it into glucose molecules that can subsequently be taken up by the phosphotransferase-mediated uptake system. This chain is Putative periplasmic trehalase, found in Salmonella typhi.